A 206-amino-acid chain; its full sequence is 2,3-bisphosphoglycerate-dependent phosphoglycerate mutase (206 aa).

Substrate contacts are provided by residues 9 to 16, 22 to 23, R61, 88 to 91, K99, 115 to 116, and 159 to 160; these read RHGQSEWN, TG, ERNY, RR, and GN. The active-site Tele-phosphohistidine intermediate is the H10. Catalysis depends on E88, which acts as the Proton donor/acceptor.

It belongs to the phosphoglycerate mutase family. BPG-dependent PGAM subfamily. As to quaternary structure, homodimer.

It carries out the reaction (2R)-2-phosphoglycerate = (2R)-3-phosphoglycerate. Its pathway is carbohydrate degradation; glycolysis; pyruvate from D-glyceraldehyde 3-phosphate: step 3/5. Functionally, catalyzes the interconversion of 2-phosphoglycerate and 3-phosphoglycerate. The chain is 2,3-bisphosphoglycerate-dependent phosphoglycerate mutase from Bartonella tribocorum (strain CIP 105476 / IBS 506).